Consider the following 316-residue polypeptide: Olfactory receptor 5AP2 (316 aa).

At 1–34 the chain is on the extracellular side; it reads MRLMKEVRGRNQTEVTEFLLLGLSDNPDLQGVLF. N11 carries an N-linked (GlcNAc...) asparagine glycan. Residues 35 to 55 form a helical membrane-spanning segment; sequence ALFLLIYMANMVGNLGMIVLI. Position 56 (K56) is a topological domain, cytoplasmic. A helical transmembrane segment spans residues 57–77; it reads IDLCLHTPMYFFLSSLSFVDA. The Extracellular segment spans residues 78-104; the sequence is SYSSSVTPKMLVNLMAENKAISFHGCA. Cysteines 103 and 195 form a disulfide. The chain crosses the membrane as a helical span at residues 105-125; sequence AQFYFFGSFLGTECFLLAMMA. Topologically, residues 126-135 are cytoplasmic; sequence YDRYAAIWNP. Residues 136–156 traverse the membrane as a helical segment; it reads LLYPVLVSGRICFLLIATSFL. The Extracellular portion of the chain corresponds to 157–210; it reads AGCGNAAIHTGMTFRLSFCGSNRINHFYCDTPPLLKLSCSDTHFNGIVIMAFSS. A helical transmembrane segment spans residues 211–231; it reads FIVISCVMIVLISYLCIFIAV. The Cytoplasmic portion of the chain corresponds to 232 to 245; that stretch reads LKMPSLEGRHKAFS. The helical transmembrane segment at 246-266 threads the bilayer; that stretch reads TCASYLMAVTIFFGTILFMYL. The Extracellular portion of the chain corresponds to 267 to 278; it reads RPTSSYSMEQDK. A helical transmembrane segment spans residues 279 to 299; the sequence is VVSVFYTVIIPVLNPLIYSLK. Residues 300-316 are Cytoplasmic-facing; it reads NKDVKKALKKILWKHIL.

The protein belongs to the G-protein coupled receptor 1 family.

Its subcellular location is the cell membrane. Its function is as follows. Odorant receptor. The chain is Olfactory receptor 5AP2 from Homo sapiens (Human).